Consider the following 324-residue polypeptide: Antihemorrhagic factor jMSF (324 aa).

The N-terminal stretch at 1–19 (MHFLVALVLLGQIIGSTLS) is a signal peptide. 2 consecutive Cystatin fetuin-A-type domains span residues 22-130 (VRGD…VKCH) and 141-254 (RNCP…SDCV). A Cell attachment site motif is present at residues 23–25 (RGD). 7 disulfide bridges follow: Cys28–Cys315, Cys85–Cys96, Cys110–Cys129, Cys143–Cys146, Cys205–Cys217, Cys230–Cys253, and Cys287–Cys291. Asn204 is a glycosylation site (N-linked (GlcNAc...) asparagine). N-linked (GlcNAc...) asparagine glycosylation occurs at Asn282.

As to quaternary structure, homodimer. Expressed by the liver.

The protein resides in the secreted. In terms of biological role, suppress hemorrhage induced by metalloproteinases from the same venom (brevilysin-H3, -H4, -H6) and from habu venom (weak inhibition of the metalloproteinases HR2A). The non-hemorrhagic brevilysin-H2 is strongly inhibited by jMSF, whereas the brevilysin-L6 is not inhibited. Does not inhibit serine and cysteine proteases such as trypsin, chymotrypsin, thermolysin, and papain. The inhibition may occur by formation of a non-covalent complex between this protein and the proteinases at their metalloproteinase domains. The polypeptide is Antihemorrhagic factor jMSF (Gloydius blomhoffii (Mamushi)).